A 629-amino-acid polypeptide reads, in one-letter code: Hemocyanin C chain (629 aa).

His175, His179, His206, His326, His330, and His366 together coordinate Cu cation. A glycan (N-linked (GlcNAc...) asparagine) is linked at Asn451. Cysteines 537 and 585 form a disulfide. Residue Asn618 is glycosylated (N-linked (GlcNAc...) asparagine).

It belongs to the tyrosinase family. Hemocyanin subfamily. Tarantula hemocyanin is a 24-chain polymer with seven different chains identified. Hemolymph.

It is found in the secreted. The protein localises to the extracellular space. Its function is as follows. Hemocyanins are copper-containing oxygen carriers occurring freely dissolved in the hemolymph of many mollusks and arthropods. The polypeptide is Hemocyanin C chain (HCC) (Aphonopelma sp. (American tarantula)).